Here is a 199-residue protein sequence, read N- to C-terminus: Adenylate kinase (199 aa).

Residue 10 to 15 (GAGKGT) participates in ATP binding. An NMP region spans residues 30–59 (STGDMLRAAVAARTPVGLQAKSIMESGGLV). AMP contacts are provided by residues Thr-31, Arg-36, 57–59 (GLV), 85–88 (GFPR), and Gln-92. The interval 126 to 142 (KRAAETLARGEAVRKDD) is LID. Arg-127 lines the ATP pocket. Positions 139 and 150 each coordinate AMP. Position 178 (Ala-178) interacts with ATP.

Belongs to the adenylate kinase family. In terms of assembly, monomer.

The protein localises to the cytoplasm. It catalyses the reaction AMP + ATP = 2 ADP. It participates in purine metabolism; AMP biosynthesis via salvage pathway; AMP from ADP: step 1/1. Catalyzes the reversible transfer of the terminal phosphate group between ATP and AMP. Plays an important role in cellular energy homeostasis and in adenine nucleotide metabolism. This is Adenylate kinase from Methylobacterium nodulans (strain LMG 21967 / CNCM I-2342 / ORS 2060).